The sequence spans 1025 residues: MSYRSKQASISRFFKSTKSNNSAKNEPAVQHIPKKTGVMLKFSYNNKENVVEGGKDTEGPHIVGSHVELPGQSVNSVVNSDSIVVNSNLEIDPKISSVLKRKPDIDIQLKTTKKRSKTLTPLEKQIRELRESHKDKVLVIQIGYKYKMFGDDAKLGSKILDIMYIRGGDDGTRDEFSYCSFPDFKLHINLKRLLTHGLKIGVVKQLESAIVKTVEKSSKSSDLMKREITGVYTRGTYMGDEYVQSSGNSADTESPYYIICINEINQKELSMVAVQPKTGDIVQDTFKDGLNRDELETRLMYLNPSEVIVLSSEQPSVETLKTIRLVASDVQLLPRKRKGEDEVFNGLIEFFDSIDNGKYKHLGDYFSVNFSKHIQSCFYELINYLSEFKLSNVFTIPDNISNFTNSRKYMVLPNNTLYALEIFQNYTNPASQKGTLIWLLNHTRTRFGNRLLNKWVSKPLIEKEKIEERLLAIEDLTGDFNNVVDALKIQLDKMGKSLDLEELLMKTHYAATYNLDKINRRDIYNMLDCFQSVLESMNRFEKGITEFSKTKKSPLLTNILLELSEMSKTTVVSNLLNKINRSYVMNESKDPEEQVTQFFNLDNHNWEDIRSEFSELDKIEKLFEEELLNIRRVLKRPQLQYITNNKEPYLIEVRNGKQVDELPTDFHRINGTTTVSRFRSERTAQLYIKKQYHKEKLLVNCNVAFNDFLKEIDEQYEFFSKIVKNLSVFDCLLSLTAASLASKNTRPILVDQQLIEVQKGRNPIIESLHNRNDYVPNDIDICYDNKVLIITGPNMGGKSSYVKQVALLVIMSQIGCYIPCDRATLGVFDSIFIRMGASDNILKGNSTFMNEMLECSNIIHGISNKSLVILDEIGRGTGTSDGIALAYSILRYLIESPLRPLVLFITHYPSLHVLEDSFPTVVTNYHMGFQQIHKDDNDFPEIIFLYNLVKGVINNSYGLNVAKLAGLPVSVISGAHRVSESLKYKVEIQQKEQFTMKFGSILQMLKKDEINSNNILELENLFSYI.

Residues 1–24 (MSYRSKQASISRFFKSTKSNNSAK) show a composition bias toward polar residues. The interval 1–28 (MSYRSKQASISRFFKSTKSNNSAKNEPA) is disordered. Residues 114 to 235 (KRSKTLTPLE…REITGVYTRG (122 aa)) are mispair-binding domain. 792–799 (GPNMGGKS) provides a ligand contact to ATP.

It belongs to the DNA mismatch repair MutS family. MSH3 subfamily. Heterodimer consisting of MSH2-MSH3 (MutS beta). Forms a ternary complex with MutL alpha (MLH1-PMS1).

The protein resides in the nucleus. Functionally, component of the post-replicative DNA mismatch repair system (MMR). Heterodimerizes with MSH2 to form MutS beta, which binds to DNA mismatches thereby initiating DNA repair. MSH3 provides substrate-binding and substrate specificity to the complex. When bound, the MutS beta heterodimer bends the DNA helix and shields approximately 20 base pairs. Acts mainly to repair insertion-deletion loops (IDLs) from 2 to 13 nucleotides in size, but can also repair base-base and single insertion-deletion mismatches that occur during replication. After mismatch binding, forms a ternary complex with the MutL alpha heterodimer, which is thought to be responsible for directing the downstream MMR events, including strand discrimination, excision, and resynthesis. ATP binding and hydrolysis play a pivotal role in mismatch repair functions. This Scheffersomyces stipitis (strain ATCC 58785 / CBS 6054 / NBRC 10063 / NRRL Y-11545) (Yeast) protein is DNA mismatch repair protein MSH3 (MSH3).